The primary structure comprises 250 residues: Envelope glycoprotein L (250 aa).

Positions M1–A18 are cleaved as a signal peptide. In terms of domain architecture, gL betaherpesvirus-type spans K31–R239. C136 and C141 are oxidised to a cystine.

It belongs to the herpesviridae glycoprotein L (gL) family. Betaherpesvirinae gL subfamily. As to quaternary structure, interacts with glycoprotein H (gH); this interaction is necessary for the correct processing and cell surface expression of gH. Part of a gH-gL-gO complex.

Its subcellular location is the virion membrane. It localises to the host cell membrane. It is found in the host Golgi apparatus. The protein localises to the host trans-Golgi network. In terms of biological role, the heterodimer glycoprotein H-glycoprotein L is required for the fusion of viral and plasma membranes leading to virus entry into the host cell. Acts as a functional inhibitor of gH and maintains gH in an inhibited form. Upon binding to host integrins, gL dissociates from gH leading to activation of the viral fusion glycoproteins gB and gH. In Human herpesvirus 6A (strain Uganda-1102) (HHV-6 variant A), this protein is Envelope glycoprotein L.